The following is a 336-amino-acid chain: MSALEKNKSFDLLKQNAIYFVLLILLGIIIAQDPTFLNLVNFSNILTQSSVRLIIALGVAGLLITQGTDLSAGRQVGLAAVISATMLQSMENINRVFPEMGQIPIPVVILAVCAIGAVIGLVNGLVIAYLNVTPFIATMGTMIIIYGFNSLYYDAVGGSPIAGFSENFSTFAQGFFRVGSFKLSYITIYAAIAALLVWIMWNKTRFGKNVFAIGGNPEAAKVSGVNVARNLVAIYMIAGMFYAFGGMLEAGRIGSATNNLGFMYELDAIAACVVGGVSFAGGVGTVIGVITGVIIFTVINYGLTYIGVNPYWQYIIKGSIIILAVAIDSLKYAKKK.

A run of 8 helical transmembrane segments spans residues 17–37, 53–73, 107–127, 128–148, 181–201, 231–251, 257–277, and 306–326; these read AIYF…PTFL, LIIA…LSAG, VVIL…GLVI, AYLN…IYGF, FKLS…WIMW, LVAI…LEAG, TNNL…VGGV, and IGVN…LAVA.

Belongs to the binding-protein-dependent transport system permease family. AraH/RbsC subfamily. As to quaternary structure, the complex is composed of one ATP-binding protein (MglA), two transmembrane proteins (MglC) and a solute-binding protein (MglB).

The protein localises to the cell inner membrane. Its function is as follows. Part of the ABC transporter complex MglABC involved in galactose/methyl galactoside import. Probably responsible for the translocation of the substrate across the membrane. In Haemophilus influenzae (strain ATCC 51907 / DSM 11121 / KW20 / Rd), this protein is Galactose/methyl galactoside import permease protein MglC (mglC).